Here is an 864-residue protein sequence, read N- to C-terminus: Leucine--tRNA ligase (864 aa).

The 'HIGH' region signature appears at 42–52 (PYPSGKLHMGH). The short motif at 624 to 628 (KMSKS) is the 'KMSKS' region element. Lysine 627 provides a ligand contact to ATP.

It belongs to the class-I aminoacyl-tRNA synthetase family.

It localises to the cytoplasm. It carries out the reaction tRNA(Leu) + L-leucine + ATP = L-leucyl-tRNA(Leu) + AMP + diphosphate. The sequence is that of Leucine--tRNA ligase from Burkholderia ambifaria (strain ATCC BAA-244 / DSM 16087 / CCUG 44356 / LMG 19182 / AMMD) (Burkholderia cepacia (strain AMMD)).